Reading from the N-terminus, the 308-residue chain is Cyclin-D4-1 (308 aa).

Belongs to the cyclin family. Cyclin D subfamily. In terms of assembly, interacts with CDKA-1, CDKB2-1, KRP4/ICK7, KRP5/ICK3, KRP6/ICK4 and KRP7/ICK5. Expressed in shoot apical meristem, leaf primordia vascular tissues and tapetum of anthers.

In terms of biological role, may activate cell cycle in the root apical meristem (RAM) and promote embryonic root (radicle) protrusion. In Arabidopsis thaliana (Mouse-ear cress), this protein is Cyclin-D4-1 (CYCD4-1).